A 1057-amino-acid chain; its full sequence is Carbamoyl phosphate synthase large chain (1057 aa).

The tract at residues 1 to 401 is carboxyphosphate synthetic domain; the sequence is MPKRNDIKTI…SLLKAIRSLE (401 aa). The ATP site is built by Arg129, Arg169, Gly175, Gly176, Lys208, Ile210, Glu215, Gly241, Ile242, His243, Gln284, and Glu298. An ATP-grasp 1 domain is found at 133–327; the sequence is RTLMNDLNVP…IAKLAAKIAV (195 aa). Residues Gln284, Glu298, and Asn300 each coordinate Mg(2+). The Mn(2+) site is built by Gln284, Glu298, and Asn300. An oligomerization domain region spans residues 402–546; it reads YGVHHLGLPN…YGTYETENES (145 aa). A carbamoyl phosphate synthetic domain region spans residues 547–929; that stretch reads IVTDKEKILV…ALFKGLTGSG (383 aa). An ATP-grasp 2 domain is found at 671-861; sequence EALLRKINVP…MAQLAMRAII (191 aa). ATP-binding residues include Arg707, Arg746, Leu748, Glu752, Gly777, Val778, His779, Ser780, Gln820, and Glu832. Residues Gln820, Glu832, and Asn834 each coordinate Mg(2+). Mn(2+)-binding residues include Gln820, Glu832, and Asn834. An MGS-like domain is found at 930–1057; the sequence is VEVKDHGTVL…ESMTFTMRQM (128 aa). Residues 930-1057 are allosteric domain; the sequence is VEVKDHGTVL…ESMTFTMRQM (128 aa).

It belongs to the CarB family. In terms of assembly, composed of two chains; the small (or glutamine) chain promotes the hydrolysis of glutamine to ammonia, which is used by the large (or ammonia) chain to synthesize carbamoyl phosphate. Tetramer of heterodimers (alpha,beta)4. The cofactor is Mg(2+). It depends on Mn(2+) as a cofactor.

The catalysed reaction is hydrogencarbonate + L-glutamine + 2 ATP + H2O = carbamoyl phosphate + L-glutamate + 2 ADP + phosphate + 2 H(+). It catalyses the reaction hydrogencarbonate + NH4(+) + 2 ATP = carbamoyl phosphate + 2 ADP + phosphate + 2 H(+). It functions in the pathway amino-acid biosynthesis; L-arginine biosynthesis; carbamoyl phosphate from bicarbonate: step 1/1. It participates in pyrimidine metabolism; UMP biosynthesis via de novo pathway; (S)-dihydroorotate from bicarbonate: step 1/3. Large subunit of the glutamine-dependent carbamoyl phosphate synthetase (CPSase). CPSase catalyzes the formation of carbamoyl phosphate from the ammonia moiety of glutamine, carbonate, and phosphate donated by ATP, constituting the first step of 2 biosynthetic pathways, one leading to arginine and/or urea and the other to pyrimidine nucleotides. The large subunit (synthetase) binds the substrates ammonia (free or transferred from glutamine from the small subunit), hydrogencarbonate and ATP and carries out an ATP-coupled ligase reaction, activating hydrogencarbonate by forming carboxy phosphate which reacts with ammonia to form carbamoyl phosphate. This is Carbamoyl phosphate synthase large chain from Staphylococcus aureus (strain USA300 / TCH1516).